A 3419-amino-acid chain; its full sequence is Utrophin (3419 aa).

Positions 1 to 246 are actin-binding; that stretch reads MAKYGHLEAS…LPDKKSIIMY (246 aa). Tyr4 carries the post-translational modification Phosphotyrosine. Ser10 carries the phosphoserine modification. Calponin-homology (CH) domains lie at 31-135 and 150-255; these read DVQK…LHWQ and TNSE…EVLP. Residues 268–905 form an interaction with SYNM region; it reads TLPRKYKKEC…YQQQLENELK (638 aa). The residue at position 295 (Ser295) is a Phosphoserine. 17 Spectrin repeats span residues 312–416, 421–525, 532–636, 690–795, 801–901, 910–1012, 1019–1121, 1128–1229, 1236–1333, 1335–1436, 1438–1540, 1547–1648, 1653–1747, 1748–1840, 1841–1958, 1969–2070, and 2077–2176; these read DSYQ…SRLH, ELQK…NRLQ, QELL…NQVT, KKFD…RKIQ, NAYF…QQLE, PAYL…RSLE, RDFK…SRLS, MNLK…HTLE, VELL…ISLE, QLQV…LFQK, ANFE…QDLE, RKLK…NTLL, QLEV…INSA, QMLI…KIKA, IPQR…SDRR, KQFH…PRLK, and SGYR…KTRT. Positions 1336–1761 are interaction with SYNM; that stretch reads LQVLRETDHM…GQDPAGTVEA (426 aa). Residue Ser1998 is modified to Phosphoserine. Ser2201 carries the phosphoserine modification. Spectrin repeat units lie at residues 2216–2319, 2336–2426, 2433–2542, 2549–2674, and 2681–2783; these read ADLD…QQLE, EELM…SALE, QTSR…AHLE, NRLL…KQVG, and RDLQ…KQLQ. The tract at residues 2616–2640 is disordered; that stretch reads DQPIEAPEEPRRNPQSKTELTPEER. Positions 2785 to 3152 are interaction with SYNM; that stretch reads AHRDFGPSSQ…TVLEGDNLET (368 aa). A WW domain is found at 2799–2832; the sequence is TSVQLPWQRSISHNKVPYYINHQTQTTCWDHPKM. A ZZ-type; degenerate zinc finger spans residues 3052–3108; it reads KHQAKCNICKECPIVGFRYRSLKHFNYDVCQSCFFSGRTAKGHKLHYPMVEYCIPTT. Positions 3057, 3060, 3081, and 3084 each coordinate Zn(2+). Disordered stretches follow at residues 3277 to 3296 and 3344 to 3395; these read RRGL…YHTS and DSDS…TDLT. Ser3284 carries the phosphoserine modification.

In terms of assembly, homodimer. Interacts with the syntrophins SNTA1; SNTB1 and SNTB2. Interacts with SYNM. Interacts (via its WWW and ZZ domains) with DAG1 (via the PPXY motif of betaDAG1); the interaction is inhibited by the tyrosine phosphorylation of the PPXY motif of DAG1. Interacts with DTNB. Interacts with PGM5.

The protein localises to the postsynaptic cell membrane. It is found in the cytoplasm. The protein resides in the cytoskeleton. May play a role in anchoring the cytoskeleton to the plasma membrane. The polypeptide is Utrophin (Rattus norvegicus (Rat)).